Here is a 196-residue protein sequence, read N- to C-terminus: Pyridoxal 5'-phosphate synthase subunit PdxT (196 aa).

47–49 contacts L-glutamine; that stretch reads GES. Cysteine 79 acts as the Nucleophile in catalysis. L-glutamine contacts are provided by residues arginine 106 and 134–135; that span reads IR. Residues histidine 170 and glutamate 172 each act as charge relay system in the active site.

This sequence belongs to the glutaminase PdxT/SNO family. In terms of assembly, in the presence of PdxS, forms a dodecamer of heterodimers. Only shows activity in the heterodimer.

It carries out the reaction aldehydo-D-ribose 5-phosphate + D-glyceraldehyde 3-phosphate + L-glutamine = pyridoxal 5'-phosphate + L-glutamate + phosphate + 3 H2O + H(+). It catalyses the reaction L-glutamine + H2O = L-glutamate + NH4(+). It functions in the pathway cofactor biosynthesis; pyridoxal 5'-phosphate biosynthesis. Functionally, catalyzes the hydrolysis of glutamine to glutamate and ammonia as part of the biosynthesis of pyridoxal 5'-phosphate. The resulting ammonia molecule is channeled to the active site of PdxS. This is Pyridoxal 5'-phosphate synthase subunit PdxT from Bacillus pumilus (strain SAFR-032).